The chain runs to 422 residues: MMTTLTATVPEFLPPSLKSTRGYFNSHSEFGVSISKFSRRRFHNPTRVFAVSDISKLVTEFDPKIPLERASTPPSSWYTDPQFYSFELDRVFYGGWQAVGYSDQIKESRDFFTGRLGDVDFVVCRDENGKIHAFHNVCSHHASILASGNGRKSCFVCLYHGWTYSLSGSLVKATRMSGIQNFSLSEMGLKPLRVAVWGPFVLLKVTAATSRKGEVETDELVASEWLGTSVGRLSQGGVDSPLSYICRREYTIDCNWKVFCDNYLDGGYHVPYAHKGLMSGLDLETYSTTIFEKVSIQECGGGSKVGEDGFDRLGSEALYAFVYPNFMINRYGPWMDTNLVLPLGPRKCKVVFDYFLDPSLKDDEAFIKRSLEESDRVQMEDVMLCESVQRGLESQAYDKGRYALVEKPMHHFHCLLHHNLKL.

The N-terminal 47 residues, 1 to 47 (MMTTLTATVPEFLPPSLKSTRGYFNSHSEFGVSISKFSRRRFHNPTR), are a transit peptide targeting the chloroplast. One can recognise a Rieske domain in the interval 96 to 203 (WQAVGYSDQI…VAVWGPFVLL (108 aa)). [2Fe-2S] cluster contacts are provided by cysteine 138, histidine 140, cysteine 157, and histidine 160. Positions 269 and 274 each coordinate Fe cation.

Belongs to the choline monooxygenase family. It depends on [2Fe-2S] cluster as a cofactor. Requires Fe cation as cofactor. The cofactor is Mg(2+).

The protein resides in the plastid. It localises to the chloroplast stroma. It catalyses the reaction choline + 2 reduced [2Fe-2S]-[ferredoxin] + O2 + 2 H(+) = betaine aldehyde hydrate + 2 oxidized [2Fe-2S]-[ferredoxin] + H2O. The protein operates within amine and polyamine biosynthesis; betaine biosynthesis via choline pathway; betaine aldehyde from choline (monooxygenase route): step 1/1. Its function is as follows. Catalyzes the first step of the osmoprotectant glycine betaine synthesis. The chain is Choline monooxygenase, chloroplastic from Arabidopsis thaliana (Mouse-ear cress).